The following is a 582-amino-acid chain: uncharacterized protein (582 aa).

6 helical membrane-spanning segments follow: residues 17 to 37, 57 to 77, 131 to 151, 156 to 176, 239 to 259, and 271 to 291; these read VAML…LPTV, LGAV…GAVY, MTAT…IMAI, ALTW…YWII, ALML…LIWF, and VGSL…VLMA. In terms of domain architecture, ABC transmembrane type-1 spans 17–300; that stretch reads VAMLMMLQLV…ATMTLAVLPR (284 aa). The region spanning 335-571 is the ABC transporter domain; sequence VRLAGATFTY…CPTYAEFAAS (237 aa). An ATP-binding site is contributed by 369–376; sequence GSTGSGKS.

Belongs to the ABC transporter superfamily. MsbA family.

It is found in the cell membrane. This is an uncharacterized protein from Mycobacterium bovis (strain ATCC BAA-935 / AF2122/97).